The chain runs to 132 residues: Small ribosomal subunit protein uS8 (132 aa).

Belongs to the universal ribosomal protein uS8 family. Part of the 30S ribosomal subunit. Contacts proteins S5 and S12.

One of the primary rRNA binding proteins, it binds directly to 16S rRNA central domain where it helps coordinate assembly of the platform of the 30S subunit. This Borreliella burgdorferi (strain ZS7) (Borrelia burgdorferi) protein is Small ribosomal subunit protein uS8.